The following is a 323-amino-acid chain: Cytoskeleton protein RodZ (323 aa).

The Cytoplasmic portion of the chain corresponds to M1–G111. Positions L19–L71 constitute an HTH cro/C1-type domain. The segment at residues Q30–E49 is a DNA-binding region (H-T-H motif). A helical; Signal-anchor for type II membrane protein transmembrane segment spans residues W112–W132. Residues W133–Q323 are Periplasmic-facing. 2 stretches are compositionally biased toward polar residues: residues Q149–N172 and N179–Q214. The tract at residues Q149–V236 is disordered. Positions T215–A234 are enriched in low complexity.

The protein belongs to the RodZ family.

It localises to the cell inner membrane. Cytoskeletal protein that is involved in cell-shape control through regulation of the length of the long axis. The protein is Cytoskeleton protein RodZ of Serratia proteamaculans (strain 568).